Consider the following 73-residue polypeptide: Large ribosomal subunit protein bL31 (73 aa).

It belongs to the bacterial ribosomal protein bL31 family. Type A subfamily. In terms of assembly, part of the 50S ribosomal subunit.

Functionally, binds the 23S rRNA. The protein is Large ribosomal subunit protein bL31 of Rhodospirillum centenum (strain ATCC 51521 / SW).